The following is a 664-amino-acid chain: Degenerin del-1 (664 aa).

The Cytoplasmic portion of the chain corresponds to 1 to 67; it reads MARKYIDILK…IFTTSLYWVR (67 aa). A helical membrane pass occupies residues 68–88; it reads FLWVVVSLVCICLCMYSFSHV. The Extracellular portion of the chain corresponds to 89–607; that stretch reads KDKYDRKEKI…WFNLMADMGG (519 aa). N-linked (GlcNAc...) asparagine glycans are attached at residues Asn241, Asn300, Asn394, Asn508, and Asn562. A helical transmembrane segment spans residues 608 to 628; sequence QAGLFLGASIMSVIEFLFFAV. The Cytoplasmic segment spans residues 629–664; sequence RTLGIACKPRRWRQKTELLRAEELNDAEKGVSTNNN.

This sequence belongs to the amiloride-sensitive sodium channel (TC 1.A.6) family.

Its subcellular location is the membrane. In terms of biological role, probable sodium channel subunit. The polypeptide is Degenerin del-1 (del-1) (Caenorhabditis elegans).